The following is a 536-amino-acid chain: Inactive phospholipase D5 (536 aa).

Topologically, residues 1–68 (MEIRQHEWLS…DKLEHSQQKC (68 aa)) are cytoplasmic. Residues 69 to 89 (IVIFALVCCFAVLVALIFSAV) traverse the membrane as a helical segment. Residues 90–536 (DIMGEDEDGL…NATGREPLSV (447 aa)) are Extracellular-facing. N-linked (GlcNAc...) asparagine glycosylation is present at asparagine 121. The PLD phosphodiesterase 1 domain maps to 215–242 (NKGRLQSSFWIVDKQHVYIGSAGLDWRS). N-linked (GlcNAc...) asparagine glycosylation is present at asparagine 302. Residues 434 to 460 (FPKLNRNKYMVTDGAAYIGNFDWVGND) form the PLD phosphodiesterase 2 domain. The interval 503 to 536 (QPTKQPNCSSLSKLKSPSKQPAMANATGREPLSV) is disordered. Positions 511–521 (SSLSKLKSPSK) are enriched in low complexity.

Belongs to the phospholipase D family.

It is found in the membrane. The polypeptide is Inactive phospholipase D5 (Pld5) (Mus musculus (Mouse)).